The primary structure comprises 98 residues: NADH-ubiquinone oxidoreductase chain 4L (98 aa).

The next 3 helical transmembrane spans lie at 1-21, 29-49, and 61-81; these read MSMV…GMLV, SLLC…VTIL, and IVLL…LVMV.

Belongs to the complex I subunit 4L family. Core subunit of respiratory chain NADH dehydrogenase (Complex I) which is composed of 45 different subunits.

The protein localises to the mitochondrion inner membrane. It carries out the reaction a ubiquinone + NADH + 5 H(+)(in) = a ubiquinol + NAD(+) + 4 H(+)(out). Functionally, core subunit of the mitochondrial membrane respiratory chain NADH dehydrogenase (Complex I) which catalyzes electron transfer from NADH through the respiratory chain, using ubiquinone as an electron acceptor. Part of the enzyme membrane arm which is embedded in the lipid bilayer and involved in proton translocation. The chain is NADH-ubiquinone oxidoreductase chain 4L (MT-ND4L) from Vulpes vulpes (Red fox).